A 1122-amino-acid polypeptide reads, in one-letter code: Angiopoietin-1 receptor (1122 aa).

Positions 1-22 (MDSLAGLVLCGVSLLLYGVVEG) are cleaved as a signal peptide. At 23–746 (AMDLILINSL…SADLGGGKML (724 aa)) the chain is on the extracellular side. Cys44 and Cys102 are disulfide-bonded. In terms of domain architecture, Ig-like C2-type 1 spans 44–123 (CIASGWHPHE…RTMKMRQQAS (80 aa)). 2 N-linked (GlcNAc...) asparagine glycosylation sites follow: Asn140 and Asn158. EGF-like domains lie at 210–252 (RCEA…RTCE), 254–299 (ACEP…LQCN), and 301–341 (ACPS…LQCE). Intrachain disulfides connect Cys211–Cys220, Cys224–Cys233, Cys227–Cys240, Cys242–Cys251, Cys255–Cys264, Cys268–Cys274, Cys280–Cys287, Cys289–Cys298, Cys302–Cys311, Cys315–Cys323, Cys317–Cys329, Cys331–Cys340, and Cys370–Cys424. The 91-residue stretch at 350-440 (PQIEDLPDHI…GMVEKPFNIS (91 aa)) folds into the Ig-like C2-type 2 domain. N-linked (GlcNAc...) asparagine glycosylation is found at Asn399, Asn438, Asn464, Asn558, Asn595, Asn648, and Asn690. 3 consecutive Fibronectin type-III domains span residues 444–539 (LPEP…TASI), 543–635 (PPRG…TLSD), and 640–733 (QPEN…TLPH). The chain crosses the membrane as a helical span at residues 747–767 (LIAILGSAGMTCITVLLAFLI). At 768–1122 (MLQLKRANVQ…GIDCSAEEAA (355 aa)) the chain is on the cytoplasmic side. Residues 822-1094 (IKFQDVIGEG…QILVSLNRML (273 aa)) form the Protein kinase domain. ATP is bound by residues 828–836 (IGEGNFGQV) and Lys853. Tyr858 carries the post-translational modification Phosphotyrosine; by autocatalysis. Asp962 (proton acceptor) is an active-site residue. Tyr990, Tyr1100, and Tyr1106 each carry phosphotyrosine; by autocatalysis.

The protein belongs to the protein kinase superfamily. Tyr protein kinase family. Tie subfamily. In terms of assembly, homodimer. Heterodimer with TIE1. Interacts with ANGPT1, ANGPT2 and ANGPT4. At cell-cell contacts in quiescent cells, forms a signaling complex composed of ANGPT1 plus TEK molecules from two adjoining cells. In the absence of endothelial cell-cell contacts, interaction with ANGPT1 mediates contacts with the extracellular matrix. Interacts (tyrosine phosphorylated) with TNIP2. Interacts (tyrosine phosphorylated) with SHC1 (via SH2 domain). Interacts with PTPRB; this promotes endothelial cell-cell adhesion. Interacts with DOK2, GRB2, GRB7, GRB14, PIK3R1 and PTPN11/SHP2. Colocalizes with DOK2 at contacts with the extracellular matrix in migrating cells. Post-translationally, proteolytic processing leads to the shedding of the extracellular domain (soluble TIE-2 alias sTIE-2). Autophosphorylated on tyrosine residues in response to ligand binding. Autophosphorylation occurs in trans, i.e. one subunit of the dimeric receptor phosphorylates tyrosine residues on the other subunit. Autophosphorylation occurs in a sequential manner, where Tyr-990 in the kinase activation loop is phosphorylated first, followed by autophosphorylation at Tyr-1106 and at additional tyrosine residues. ANGPT1-induced phosphorylation is impaired during hypoxia, due to increased expression of ANGPT2. Phosphorylation is important for interaction with GRB14, PIK3R1 and PTPN11. Phosphorylation at Tyr-1100 is important for interaction with GRB2 and GRB7. Phosphorylation at Tyr-1106 is important for interaction with DOK2 and for coupling to downstream signal transduction pathways in endothelial cells. Dephosphorylated by PTPRB. In terms of processing, ubiquitinated. The phosphorylated receptor is ubiquitinated and internalized, leading to its degradation. Specifically expressed in developing vascular endothelial cells. Abundantly expressed in lung and heart, moderately in brain, liver and kidney, and weakly in thymus, spleen and testis.

Its subcellular location is the cell membrane. It is found in the cell junction. The protein localises to the focal adhesion. It localises to the cytoplasm. The protein resides in the cytoskeleton. Its subcellular location is the secreted. The enzyme catalyses L-tyrosyl-[protein] + ATP = O-phospho-L-tyrosyl-[protein] + ADP + H(+). Its activity is regulated as follows. Angiopoietin binding leads to receptor dimerization and activation by autophosphorylation at Tyr-990 on the kinase activation loop. Functionally, tyrosine-protein kinase that acts as a cell-surface receptor for ANGPT1, ANGPT2 and ANGPT4 and regulates angiogenesis, endothelial cell survival, proliferation, migration, adhesion and cell spreading, reorganization of the actin cytoskeleton, but also maintenance of vascular quiescence. Has anti-inflammatory effects by preventing the leakage of pro-inflammatory plasma proteins and leukocytes from blood vessels. Required for normal angiogenesis and heart development during embryogenesis. Required for postnatal hematopoiesis. After birth, activates or inhibits angiogenesis, depending on the context. Inhibits angiogenesis and promotes vascular stability in quiescent vessels, where endothelial cells have tight contacts. In quiescent vessels, ANGPT1 oligomers recruit TEK to cell-cell contacts, forming complexes with TEK molecules from adjoining cells, and this leads to preferential activation of phosphatidylinositol 3-kinase and the AKT1 signaling cascades. In migrating endothelial cells that lack cell-cell adhesions, ANGT1 recruits TEK to contacts with the extracellular matrix, leading to the formation of focal adhesion complexes, activation of PTK2/FAK and of the downstream kinases MAPK1/ERK2 and MAPK3/ERK1, and ultimately to the stimulation of sprouting angiogenesis. ANGPT1 signaling triggers receptor dimerization and autophosphorylation at specific tyrosine residues that then serve as binding sites for scaffold proteins and effectors. Signaling is modulated by ANGPT2 that has lower affinity for TEK, can promote TEK autophosphorylation in the absence of ANGPT1, but inhibits ANGPT1-mediated signaling by competing for the same binding site. Signaling is also modulated by formation of heterodimers with TIE1, and by proteolytic processing that gives rise to a soluble TEK extracellular domain. The soluble extracellular domain modulates signaling by functioning as decoy receptor for angiopoietins. TEK phosphorylates DOK2, GRB7, GRB14, PIK3R1, SHC1 and TIE1. This is Angiopoietin-1 receptor (Tek) from Mus musculus (Mouse).